We begin with the raw amino-acid sequence, 362 residues long: Epoxyqueuosine reductase (362 aa).

The active-site Proton donor is Asp143. Residues 191-220 (PDSPKHQDSCGKCQACIKLCPTGAIQPGKM) form the 4Fe-4S ferredoxin-type domain. [4Fe-4S] cluster contacts are provided by Cys200, Cys203, Cys206, Cys210, Cys226, Cys253, Cys256, and Cys260.

It belongs to the QueG family. In terms of assembly, monomer. It depends on cob(II)alamin as a cofactor. [4Fe-4S] cluster is required as a cofactor.

It localises to the cytoplasm. It catalyses the reaction epoxyqueuosine(34) in tRNA + AH2 = queuosine(34) in tRNA + A + H2O. It functions in the pathway tRNA modification; tRNA-queuosine biosynthesis. Functionally, catalyzes the conversion of epoxyqueuosine (oQ) to queuosine (Q), which is a hypermodified base found in the wobble positions of tRNA(Asp), tRNA(Asn), tRNA(His) and tRNA(Tyr). The chain is Epoxyqueuosine reductase from Francisella cf. novicida (strain Fx1).